A 166-amino-acid polypeptide reads, in one-letter code: Eukaryotic translation initiation factor 5A (166 aa).

Lysine 52 is modified (hypusine). The disordered stretch occupies residues 99–125 (DREDPSKPAHLSLMDDEGETRDNLDMP).

The protein belongs to the eIF-5A family. In terms of processing, lys-52 undergoes hypusination, a unique post-translational modification that consists in the addition of a butylamino group from spermidine to lysine side chain, leading to the formation of the unusual amino acid hypusine. eIF-5As are the only known proteins to undergo this modification, which is essential for their function. Hypusination is mediated by the consecutive action of deoxyhypusine synthase DHSc and deoxyhypusine hydroxylase DOHH.

The protein resides in the cytoplasm. In terms of biological role, translation factor that promotes translation elongation and termination, particularly upon ribosome stalling at specific amino acid sequence contexts. Binds between the exit (E) and peptidyl (P) site of the ribosome and promotes rescue of stalled ribosome: specifically required for efficient translation of polyproline-containing peptides as well as other motifs that stall the ribosome. Acts as a ribosome quality control (RQC) cofactor by joining the RQC complex to facilitate peptidyl transfer during CAT tailing step. Required for cell growth during both bloodstream (BF) and insect procyclic (PF) life cycle stages and for survival of the bloodstream form. The chain is Eukaryotic translation initiation factor 5A from Trypanosoma brucei brucei (strain 927/4 GUTat10.1).